The chain runs to 301 residues: Prestalk A differentiation protein A (301 aa).

It belongs to the NmrA-type oxidoreductase family.

Functionally, involved in development and cell differentiation. The polypeptide is Prestalk A differentiation protein A (padA) (Dictyostelium discoideum (Social amoeba)).